Reading from the N-terminus, the 257-residue chain is uncharacterized protein (257 aa).

A helical transmembrane segment spans residues 7–27 (LMLGICLVLLIILIVGYVIMT).

Belongs to the staphylococcal tandem lipoprotein family.

The protein resides in the cell membrane. This is an uncharacterized protein from Staphylococcus aureus (strain Mu50 / ATCC 700699).